The chain runs to 173 residues: Crossover junction endodeoxyribonuclease RuvC (173 aa).

Residues Asp8, Glu67, and Asp139 contribute to the active site. Residues Asp8, Glu67, and Asp139 each coordinate Mg(2+).

It belongs to the RuvC family. In terms of assembly, homodimer which binds Holliday junction (HJ) DNA. The HJ becomes 2-fold symmetrical on binding to RuvC with unstacked arms; it has a different conformation from HJ DNA in complex with RuvA. In the full resolvosome a probable DNA-RuvA(4)-RuvB(12)-RuvC(2) complex forms which resolves the HJ. It depends on Mg(2+) as a cofactor.

It localises to the cytoplasm. It carries out the reaction Endonucleolytic cleavage at a junction such as a reciprocal single-stranded crossover between two homologous DNA duplexes (Holliday junction).. The RuvA-RuvB-RuvC complex processes Holliday junction (HJ) DNA during genetic recombination and DNA repair. Endonuclease that resolves HJ intermediates. Cleaves cruciform DNA by making single-stranded nicks across the HJ at symmetrical positions within the homologous arms, yielding a 5'-phosphate and a 3'-hydroxyl group; requires a central core of homology in the junction. The consensus cleavage sequence is 5'-(A/T)TT(C/G)-3'. Cleavage occurs on the 3'-side of the TT dinucleotide at the point of strand exchange. HJ branch migration catalyzed by RuvA-RuvB allows RuvC to scan DNA until it finds its consensus sequence, where it cleaves and resolves the cruciform DNA. The protein is Crossover junction endodeoxyribonuclease RuvC of Aliivibrio fischeri (strain ATCC 700601 / ES114) (Vibrio fischeri).